A 154-amino-acid polypeptide reads, in one-letter code: Deoxyuridine 5'-triphosphate nucleotidohydrolase (154 aa).

Residues 72–74, asparagine 85, 89–91, and methionine 99 contribute to the substrate site; these read RSG and LID.

It belongs to the dUTPase family. Mg(2+) serves as cofactor.

The enzyme catalyses dUTP + H2O = dUMP + diphosphate + H(+). The protein operates within pyrimidine metabolism; dUMP biosynthesis; dUMP from dCTP (dUTP route): step 2/2. This enzyme is involved in nucleotide metabolism: it produces dUMP, the immediate precursor of thymidine nucleotides and it decreases the intracellular concentration of dUTP so that uracil cannot be incorporated into DNA. This is Deoxyuridine 5'-triphosphate nucleotidohydrolase from Psychrobacter sp. (strain PRwf-1).